A 281-amino-acid polypeptide reads, in one-letter code: Ermin (281 aa).

3 stretches are compositionally biased toward polar residues: residues 1–12, 21–31, and 135–147; these read MTDTPETLSGTE, NGQQPSSQTRQ, and AQQQ…DAST. Disordered regions lie at residues 1 to 80, 110 to 147, and 167 to 248; these read MTDT…KILN, REGH…DAST, and KCDE…GDIA. The segment covering 169-197 has biased composition (acidic residues); that stretch reads DEEEEEEEEVWNEEINEEDVDECAEEEDE. The span at 198 to 223 shows a compositional bias: basic and acidic residues; sequence VRVIEFKRKHREGSPLKEESLAREDS. A phosphoserine mark is found at Ser-211, Ser-223, Ser-227, and Ser-230. Thr-234 is subject to Phosphothreonine. Positions 262 to 281 are binds actin; sequence KIRKGNTKQRIDEFESMMHL.

In terms of assembly, binds actin. As to expression, brain and spinal cord. Exclusively expressed by the oligodendrocytes. Appears at a late stage during myelination, and in the mature nerves, it is localized to the outer cytoplasmic lip of the myelin sheath and the paranodal loops.

The protein resides in the cytoplasm. It is found in the cytoskeleton. Plays a role in cytoskeletal rearrangements during the late wrapping and/or compaction phases of myelinogenesis as well as in maintenance and stability of myelin sheath in the adult. May play an important role in late-stage oligodendroglia maturation, myelin/Ranvier node formation during CNS development, and in the maintenance and plasticity of related structures in the mature CNS. This Mus musculus (Mouse) protein is Ermin (Ermn).